We begin with the raw amino-acid sequence, 460 residues long: MAGYLSESDFVMVEEGFSTRDLLKELTLGASQATTDEVAAFFVADLGAIVRKHFCFLKCLPRVRPFYAVKCNSSPGVLKVLAQLGLGFSCANKAEMELVQHIGIPASKIICANPCKQIAQIKYAAKHGIQLLSFDNEMELAKVVKSHPSAKMVLCIATDDSHSLSCLSLKFGVSLKSCRHLLENAKKHHVEVVGVSFHIGSGCPDPQAYAQSIADARLVFEMGTELGHKMHVLDLGGGFPGTEGAKVRFEEIASVINSALDLYFPEGCGVDIFAELGRYYVTSAFTVAVSIIAKKEVLLDQPGREEENGSTSKTIVYHLDEGVYGIFNSVLFDNICPTPILQKKPSTEQPLYSSSLWGPAVDGCDCVAEGLWLPQLHVGDWLVFDNMGAYTVGMGSPFWGTQACHITYAMSRVAWEALRRQLMAAEQEDDVEGVCKPLSCGWEITDTLCVGPVFTPASIM.

The necessary for polyamine uptake stimulation stretch occupies residues 117-140 (QIAQIKYAAKHGIQLLSFDNEMEL).

It belongs to the Orn/Lys/Arg decarboxylase class-II family. ODC antizyme inhibitor subfamily. Monomer. Interacts with OAZ1, OAZ2 and OAZ3; this interaction disrupts the interaction between the antizyme and ODC1. Does not form a heterodimer with ODC1. In terms of processing, ubiquitinated, leading to its proteasomal degradation; a process that is reduced in presence of antizymes. May also be degraded through the lysosomal degradative pathway in a proteasomal-independent manner. As to expression, expressed in the neocortex, thalamus, hippocampus, cerebellum, medulla oblongata, gray and white matter. Expressed in neurons, oligodendrocytes, basket, Purkinje and pyramidal cells. Expressed in spermatocytes and Leydig cells of the testis. Expressed in luteal theca cells lining corpus luteum cysts and in hilus cells of the ovary. Expressed in primary and neoplastic mast cells (MC) (at protein level). Highly expressed in brain. Also expressed in testis.

The protein resides in the nucleus. It localises to the cytoplasm. Its subcellular location is the perinuclear region. It is found in the membrane. The protein localises to the cytoplasmic vesicle. The protein resides in the endoplasmic reticulum-Golgi intermediate compartment. It localises to the golgi apparatus. Its subcellular location is the cis-Golgi network. It is found in the trans-Golgi network. The protein localises to the cytoplasmic granule. The protein resides in the cell projection. It localises to the axon. Its subcellular location is the dendrite. It is found in the perikaryon. In terms of biological role, antizyme inhibitor (AZI) protein that positively regulates ornithine decarboxylase (ODC) activity and polyamine uptake. AZI is an enzymatically inactive ODC homolog that counteracts the negative effect of ODC antizymes (AZs) OAZ1, OAZ2 and OAZ3 on ODC activity by competing with ODC for antizyme-binding. Inhibits antizyme-dependent ODC degradation and releases ODC monomers from their inactive complex with antizymes, leading to formation of the catalytically active ODC homodimer and restoring polyamine production. Participates in the morphological integrity of the trans-Golgi network (TGN) and functions as a regulator of intracellular secretory vesicle trafficking. This is Antizyme inhibitor 2 (AZIN2) from Homo sapiens (Human).